The following is a 123-amino-acid chain: Protein LLP homolog (123 aa).

Positions 1-21 (MAKSIRSKWKRKMRAEKRKKN) are enriched in basic residues. Disordered regions lie at residues 1–23 (MAKSIRSKWKRKMRAEKRKKNAP) and 55–123 (KINE…KLAW). Basic and acidic residues predominate over residues 70 to 89 (DSSKMDMELKRNKKNLRDQH). The span at 100–123 (QQKKLKSQCGKKKGKSKQAKKLAW) shows a compositional bias: basic residues.

It belongs to the learning-associated protein family.

It is found in the nucleus. It localises to the nucleolus. The protein localises to the chromosome. Functionally, regulates dendritic and spine growth and synaptic transmission. The protein is Protein LLP homolog (llph) of Xenopus tropicalis (Western clawed frog).